Consider the following 87-residue polypeptide: Phosphocarrier protein HPr (87 aa).

Residues 1-87 (MEKIFKVTSD…ETMKNEGLGE (87 aa)) enclose the HPr domain. His-14 functions as the Pros-phosphohistidine intermediate; alternate in the catalytic mechanism. His-14 bears the Tele-phosphohistidine; alternate mark. Position 45 is a phosphoserine; by HPrK/P (Ser-45).

Belongs to the HPr family. Post-translationally, the form phosphorylated at the tele nitrogen (N(epsilon)2), instead of the expected pros nitrogen (N(delta)1), of His-14 is not able to transfer its phosphoryl group to the B.subtilis EIIA-Glc domain. This form may be inactive in PTS-catalyzed sugar transport or target an as yet unknown acceptor molecule in an alternative metabolic process.

It is found in the cytoplasm. With respect to regulation, phosphorylation on Ser-45 inhibits the phosphoryl transfer from enzyme I to HPr. General (non sugar-specific) component of the phosphoenolpyruvate-dependent sugar phosphotransferase system (sugar PTS). This major carbohydrate active-transport system catalyzes the phosphorylation of incoming sugar substrates concomitantly with their translocation across the cell membrane. The phosphoryl group from phosphoenolpyruvate (PEP) is transferred to the phosphoryl carrier protein HPr by enzyme I. Phospho-HPr then transfers it to the PTS EIIA domain. In terms of biological role, P-Ser-HPr interacts with the catabolite control protein A (CcpA), forming a complex that binds to DNA at the catabolite response elements cre, operator sites preceding a large number of catabolite-regulated genes. Thus, P-Ser-HPr is a corepressor in carbon catabolite repression (CCR), a mechanism that allows bacteria to coordinate and optimize the utilization of available carbon sources. P-Ser-HPr mediates glucose catabolite repression of cry4A toxin expression. The polypeptide is Phosphocarrier protein HPr (ptsH) (Bacillus thuringiensis subsp. israelensis).